The sequence spans 270 residues: NAD kinase (270 aa).

Aspartate 63 acts as the Proton acceptor in catalysis. Residues 63–64 (DG), 131–132 (NE), lysine 142, arginine 159, aspartate 161, 172–177 (TAYAMS), alanine 196, and glutamine 230 contribute to the NAD(+) site.

Belongs to the NAD kinase family. A divalent metal cation serves as cofactor.

The protein localises to the cytoplasm. It carries out the reaction NAD(+) + ATP = ADP + NADP(+) + H(+). Involved in the regulation of the intracellular balance of NAD and NADP, and is a key enzyme in the biosynthesis of NADP. Catalyzes specifically the phosphorylation on 2'-hydroxyl of the adenosine moiety of NAD to yield NADP. This chain is NAD kinase, found in Methanoculleus marisnigri (strain ATCC 35101 / DSM 1498 / JR1).